A 185-amino-acid chain; its full sequence is Ribosome-recycling factor (185 aa).

Belongs to the RRF family.

It is found in the cytoplasm. Responsible for the release of ribosomes from messenger RNA at the termination of protein biosynthesis. May increase the efficiency of translation by recycling ribosomes from one round of translation to another. This is Ribosome-recycling factor from Campylobacter concisus (strain 13826).